A 470-amino-acid chain; its full sequence is E3 ubiquitin-protein ligase TRAIP (470 aa).

An RING-type; atypical zinc finger spans residues 7–50 (CTICSDFFDHSRDVAAIHCGHTFHLQCLIQWFETAPSRTCPQCR). The stretch at 76–277 (AEFLKNELDS…RKKLMILQGT (202 aa)) forms a coiled coil. Residues 211 to 470 (LKEARKATGE…QPKLDTFLCQ (260 aa)) form an interaction with CYLD region. A PIP-box motif is present at residues 461-470 (QPKLDTFLCQ).

It belongs to the TRAIP family. In terms of assembly, interacts (via PIP-box) with PCNA. Binds TRAF1, TRAF2, TRAF3, TRAF5 and TRAF6 is part of the receptor-TRAF signaling complex. May interact with CYLD; the C-terminus interacts with CYLD, however the interaction was not detected with the full-length protein. Interacts with POLK and POLN. Interacts with UIMC1. Post-translationally, autoubiquitinated. Sumoylated; sumoylation is required for nuclear localization. Sumoylation increases protein stability, possibly by preventing ubiquitination. In terms of tissue distribution, detected in testis and thymus, and at lower levels in spleen.

It is found in the nucleus. Its subcellular location is the nucleoplasm. The protein localises to the nucleolus. It localises to the chromosome. The protein resides in the cytoplasm. It is found in the perinuclear region. The catalysed reaction is S-ubiquitinyl-[E2 ubiquitin-conjugating enzyme]-L-cysteine + [acceptor protein]-L-lysine = [E2 ubiquitin-conjugating enzyme]-L-cysteine + N(6)-ubiquitinyl-[acceptor protein]-L-lysine.. It functions in the pathway protein modification; protein ubiquitination. E3 ubiquitin ligase required to protect genome stability in response to replication stress. Acts as a key regulator of interstrand cross-link repair, which takes place when both strands of duplex DNA are covalently tethered together, thereby blocking replication and transcription. During mitosis, controls the choice between the two pathways of replication-coupled interstrand-cross-link repair by mediating ubiquitination of MCM7 subunit of the CMG helicase complex. Short ubiquitin chains on MCM7 promote recruitment of DNA glycosylase NEIL3. If the interstrand cross-link cannot be cleaved by NEIL3, the ubiquitin chains continue to grow on MCM7, promoting the unloading of the CMG helicase complex by the VCP/p97 ATPase, enabling the Fanconi anemia DNA repair pathway. Only catalyzes ubiquitination of MCM7 when forks converge. Also involved in the repair of covalent DNA-protein cross-links (DPCs) during DNA synthesis: promotes ubiquitination of DPCs, leading to their degradation by the proteasome. Has also been proposed to play a role in promoting translesion synthesis by mediating the assembly of 'Lys-63'-linked poly-ubiquitin chains on the Y-family polymerase POLN in order to facilitate bypass of DNA lesions and preserve genomic integrity. The function in translesion synthesis is however controversial. Acts as a regulator of the spindle assembly checkpoint. Also acts as a negative regulator of innate immune signaling by inhibiting activation of NF-kappa-B mediated by TNF. Negatively regulates TLR3/4- and RIG-I-mediated IRF3 activation and subsequent IFNB1 production and cellular antiviral response by promoting 'Lys-48'-linked polyubiquitination of TNK1 leading to its proteasomal degradation. This Mus musculus (Mouse) protein is E3 ubiquitin-protein ligase TRAIP.